The following is a 274-amino-acid chain: Formamidopyrimidine-DNA glycosylase (274 aa).

Residue proline 2 is the Schiff-base intermediate with DNA of the active site. Glutamate 3 functions as the Proton donor in the catalytic mechanism. The active-site Proton donor; for beta-elimination activity is the lysine 57. DNA is bound by residues histidine 92, arginine 111, and lysine 152. Residues 237-271 (QVYGRKGEECNDCGSIIEAKVIGQRNSFYCPKCQR) form an FPG-type zinc finger. The Proton donor; for delta-elimination activity role is filled by arginine 261.

Belongs to the FPG family. Monomer. It depends on Zn(2+) as a cofactor.

It catalyses the reaction Hydrolysis of DNA containing ring-opened 7-methylguanine residues, releasing 2,6-diamino-4-hydroxy-5-(N-methyl)formamidopyrimidine.. It carries out the reaction 2'-deoxyribonucleotide-(2'-deoxyribose 5'-phosphate)-2'-deoxyribonucleotide-DNA = a 3'-end 2'-deoxyribonucleotide-(2,3-dehydro-2,3-deoxyribose 5'-phosphate)-DNA + a 5'-end 5'-phospho-2'-deoxyribonucleoside-DNA + H(+). Functionally, involved in base excision repair of DNA damaged by oxidation or by mutagenic agents. Acts as a DNA glycosylase that recognizes and removes damaged bases. Has a preference for oxidized purines, such as 7,8-dihydro-8-oxoguanine (8-oxoG). Has AP (apurinic/apyrimidinic) lyase activity and introduces nicks in the DNA strand. Cleaves the DNA backbone by beta-delta elimination to generate a single-strand break at the site of the removed base with both 3'- and 5'-phosphates. The chain is Formamidopyrimidine-DNA glycosylase from Glaesserella parasuis serovar 5 (strain SH0165) (Haemophilus parasuis).